Reading from the N-terminus, the 237-residue chain is Sulfolipid-1 exporter Sap (237 aa).

Helical transmembrane passes span 5-25 (VLVL…VVLM), 38-58 (FLCG…VVLG), 66-86 (FSVA…AFAL), 141-161 (VSGL…AAIL), 171-191 (ALAV…PLVS), and 217-237 (DAAL…LSNL).

It belongs to the peptidoglycolipid addressing protein (GAP) (TC 2.A.116) family.

Its subcellular location is the cell inner membrane. Required for the transport across the inner membrane of sulfolipid-1 (SL-1), which is a major cell wall lipid of pathogenic mycobacteria. Could also transport SL1278 (2-palmitoyl-3-(C43)-phthioceranyl-alpha, alpha'-D-trehalose-2'-sulfate), which is the precursor of SL-1. May potentiate SL-1 levels and confer specificity for sulfolipids over structurally similar glycolipids. In Mycobacterium tuberculosis (strain ATCC 25618 / H37Rv), this protein is Sulfolipid-1 exporter Sap.